A 222-amino-acid polypeptide reads, in one-letter code: MVDEVEKPVSLEESKTNTREVEEEGEIVGESDDTMSSLGNPSMAMKHALEHSWTFWFDNPSGKSKQAAWGSSIRPIYTFSTVEDFWSVYNNIHHPSKLAVGADFHCFKNKIEPKWEDPVCANGGKWTMSFSRGKSDTCWLYTLLAMIGEQFDCGDEICGAVINVRVRQEKIALWTRNAANETAQVSIGKQWKEFLDYNDSVGFIFHDDAKKLDRAAKNRYSV.

Basic and acidic residues predominate over residues 1–20 (MVDEVEKPVSLEESKTNTRE). Residues 1–35 (MVDEVEKPVSLEESKTNTREVEEEGEIVGESDDTM) form a disordered region. The span at 21 to 33 (VEEEGEIVGESDD) shows a compositional bias: acidic residues. EIF4G-binding stretches follow at residues 47–50 (HALE) and 57–93 (FDNP…NNIH). MRNA contacts are provided by residues 65-70 (KQAAWG), Lys-97, and 115-116 (WE). Cys-120 and Cys-158 are oxidised to a cystine. Residues 141–150 (YTLLAMIGEQ) are EIF4G-binding. Residues 165–170 (RVRQEK) and 210–214 (KKLDR) contribute to the mRNA site.

This sequence belongs to the eukaryotic initiation factor 4E family. As to quaternary structure, EIF4F is a multi-subunit complex, the composition of which varies with external and internal environmental conditions. It is composed of at least EIF4A, EIF4E and EIF4G. EIF4E is also known to interact with other partners. In higher plants two isoforms of EIF4F have been identified, named isoform EIF4F and isoform EIF(iso)4F. Isoform EIF4F has subunits p220 and p26, whereas isoform EIF(iso)4F has subunits p82 and p28. In terms of assembly, (Microbial infection) Interacts with potyvirus viral genome-linked protein (VPg); this interaction is possible in susceptible hosts but impaired in resistant plants. According to the redox status, the Cys-120-Cys-158 disulfide bridge may have a role in regulating protein function by affecting its ability to bind capped mRNA. In terms of tissue distribution, strongly expressed in susceptible plants but not in resistant ones.

It localises to the nucleus. It is found in the cytoplasm. In terms of biological role, component of the protein complex eIF4F, which is involved in the recognition of the mRNA cap, ATP-dependent unwinding of 5'-terminal secondary structure and recruitment of mRNA to the ribosome. Recognizes and binds the 7-methylguanosine-containing mRNA cap during an early step in the initiation of protein synthesis and facilitates ribosome binding by inducing the unwinding of the mRNAs secondary structures. Key component of recessive resistance to potyviruses. (Microbial infection) Susceptibility host factor required for viral infection (e.g. potato virus Y (PVY) and pepper mottle virus (PepMoV)) by recruiting viral RNAs to the host ribosomal complex via an interaction with viral genome-linked protein (VPg). This chain is Eukaryotic translation initiation factor 4E-2, found in Nicotiana tabacum (Common tobacco).